Reading from the N-terminus, the 318-residue chain is Porphobilinogen deaminase (318 aa).

Cysteine 241 carries the post-translational modification S-(dipyrrolylmethanemethyl)cysteine.

Belongs to the HMBS family. Monomer. Dipyrromethane is required as a cofactor.

It carries out the reaction 4 porphobilinogen + H2O = hydroxymethylbilane + 4 NH4(+). Its pathway is porphyrin-containing compound metabolism; protoporphyrin-IX biosynthesis; coproporphyrinogen-III from 5-aminolevulinate: step 2/4. In terms of biological role, tetrapolymerization of the monopyrrole PBG into the hydroxymethylbilane pre-uroporphyrinogen in several discrete steps. The chain is Porphobilinogen deaminase from Geotalea daltonii (strain DSM 22248 / JCM 15807 / FRC-32) (Geobacter daltonii).